The sequence spans 301 residues: Nucleotide-binding protein ELI_02120 (301 aa).

Residue 12-19 (GMSGAGKS) coordinates ATP. Residue 62–65 (DSRT) coordinates GTP.

It belongs to the RapZ-like family.

In terms of biological role, displays ATPase and GTPase activities. The sequence is that of Nucleotide-binding protein ELI_02120 from Erythrobacter litoralis (strain HTCC2594).